Here is a 69-residue protein sequence, read N- to C-terminus: Large ribosomal subunit protein bL28 (69 aa).

This sequence belongs to the bacterial ribosomal protein bL28 family.

The polypeptide is Large ribosomal subunit protein bL28 (Aquifex aeolicus (strain VF5)).